A 313-amino-acid polypeptide reads, in one-letter code: Porphobilinogen deaminase (313 aa).

An S-(dipyrrolylmethanemethyl)cysteine modification is found at cysteine 242.

The protein belongs to the HMBS family. As to quaternary structure, monomer. Requires dipyrromethane as cofactor.

The enzyme catalyses 4 porphobilinogen + H2O = hydroxymethylbilane + 4 NH4(+). It participates in porphyrin-containing compound metabolism; protoporphyrin-IX biosynthesis; coproporphyrinogen-III from 5-aminolevulinate: step 2/4. Its function is as follows. Tetrapolymerization of the monopyrrole PBG into the hydroxymethylbilane pre-uroporphyrinogen in several discrete steps. This chain is Porphobilinogen deaminase, found in Pseudomonas fluorescens (strain ATCC BAA-477 / NRRL B-23932 / Pf-5).